Here is a 553-residue protein sequence, read N- to C-terminus: Chaperonin GroEL 1 (553 aa).

Residues 29 to 32, 86 to 90, Gly-413, 476 to 478, and Asp-492 contribute to the ATP site; these read TIGP, DGTTT, and NAL. Residues 520–543 are disordered; sequence DKPEPPAPAGGGGDPMGGMGGMDP. The span at 528 to 543 shows a compositional bias: gly residues; it reads AGGGGDPMGGMGGMDP.

This sequence belongs to the chaperonin (HSP60) family. In terms of assembly, forms a cylinder of 14 subunits composed of two heptameric rings stacked back-to-back. Interacts with the co-chaperonin GroES.

The protein localises to the cytoplasm. The enzyme catalyses ATP + H2O + a folded polypeptide = ADP + phosphate + an unfolded polypeptide.. Together with its co-chaperonin GroES, plays an essential role in assisting protein folding. The GroEL-GroES system forms a nano-cage that allows encapsulation of the non-native substrate proteins and provides a physical environment optimized to promote and accelerate protein folding. The sequence is that of Chaperonin GroEL 1 from Synechococcus sp. (strain CC9311).